Consider the following 1164-residue polypeptide: DNA-directed RNA polymerase subunit beta (1164 aa).

Disordered regions lie at residues 975-994 (RSSLPNRDGERQVDDFGKSN) and 1143-1164 (ANAALGINLSRDERPDADMDVS). 2 stretches are compositionally biased toward basic and acidic residues: residues 981-991 (RDGERQVDDFG) and 1152-1164 (SRDERPDADMDVS).

The protein belongs to the RNA polymerase beta chain family. In terms of assembly, the RNAP catalytic core consists of 2 alpha, 1 beta, 1 beta' and 1 omega subunit. When a sigma factor is associated with the core the holoenzyme is formed, which can initiate transcription.

It catalyses the reaction RNA(n) + a ribonucleoside 5'-triphosphate = RNA(n+1) + diphosphate. In terms of biological role, DNA-dependent RNA polymerase catalyzes the transcription of DNA into RNA using the four ribonucleoside triphosphates as substrates. This is DNA-directed RNA polymerase subunit beta from Corynebacterium jeikeium (strain K411).